Here is a 162-residue protein sequence, read N- to C-terminus: Interleukin-15 (162 aa).

Residues 1-29 (MRISKPHLRSVSIQCYLCLLLNSHFLTEA) form the signal peptide. Residues 30–48 (GIHVFILGCFSAGLPKTEA) constitute a propeptide that is removed on maturation. Cystine bridges form between C83-C133 and C90-C136. N-linked (GlcNAc...) asparagine glycosylation is present at N127.

This sequence belongs to the IL-15/IL-21 family.

The protein resides in the secreted. In terms of biological role, cytokine that plays a major role in the development of inflammatory and protective immune responses to microbial invaders and parasites by modulating immune cells of both the innate and adaptive immune systems. Stimulates the proliferation of natural killer cells, T-cells and B-cells and promotes the secretion of several cytokines. In monocytes, induces the production of IL8 and monocyte chemotactic protein 1/CCL2, two chemokines that attract neutrophils and monocytes respectively to sites of infection. Unlike most cytokines, which are secreted in soluble form, IL15 is expressed in association with its high affinity IL15RA on the surface of IL15-producing cells and delivers signals to target cells that express IL2RB and IL2RG receptor subunits. Binding to its receptor triggers the phosphorylation of JAK1 and JAK3 and the recruitment and subsequent phosphorylation of signal transducer and activator of transcription-3/STAT3 and STAT5. In mast cells, induces the rapid tyrosine phosphorylation of STAT6 and thereby controls mast cell survival and release of cytokines such as IL4. In Macaca thibetana (Pere David's macaque), this protein is Interleukin-15 (IL15).